Reading from the N-terminus, the 525-residue chain is GMP synthase [glutamine-hydrolyzing] (525 aa).

The 199-residue stretch at 9 to 207 (RILILDFGSQ…VQDICGCEAL (199 aa)) folds into the Glutamine amidotransferase type-1 domain. Cys86 acts as the Nucleophile in catalysis. Catalysis depends on residues His181 and Glu183. A GMPS ATP-PPase domain is found at 208-400 (WTPSNIVEDA…LGLPYDMVYR (193 aa)). 235–241 (SGGVDSS) provides a ligand contact to ATP.

Homodimer.

It catalyses the reaction XMP + L-glutamine + ATP + H2O = GMP + L-glutamate + AMP + diphosphate + 2 H(+). It functions in the pathway purine metabolism; GMP biosynthesis; GMP from XMP (L-Gln route): step 1/1. Functionally, catalyzes the synthesis of GMP from XMP. This Pseudomonas putida (strain W619) protein is GMP synthase [glutamine-hydrolyzing].